Reading from the N-terminus, the 51-residue chain is MRMKKCPNCKNYTLNTICQCGEKTITVKPPRYSPTDKYGKYRRMLKKSIKQ.

Belongs to the NOP10 family.

In terms of biological role, involved in ribosome biogenesis; more specifically in 18S rRNA pseudouridylation and in cleavage of pre-rRNA. This Methanococcus aeolicus (strain ATCC BAA-1280 / DSM 17508 / OCM 812 / Nankai-3) protein is Ribosome biogenesis protein Nop10.